Consider the following 96-residue polypeptide: Bublin coiled-coil protein (96 aa).

Residues 39-79 adopt a coiled-coil conformation; sequence NSCLDDIEDRNDALNGKLHELLESNRQARKDFRQQLNDEEA. The interval 63 to 96 is disordered; that stretch reads NRQARKDFRQQLNDEEASPPPAEDPASRDTQTED. A compositionally biased stretch (basic and acidic residues) spans 87–96; sequence PASRDTQTED.

The protein belongs to the UPF0184 (EST00098) family.

It localises to the cell junction. The protein resides in the cytoplasm. Its subcellular location is the cytoskeleton. Its function is as follows. Essential for intermediate filament organization in intestinal cells, interacts with intermediate filament and regulates intestinal lumen morphology. The sequence is that of Bublin coiled-coil protein (bbln) from Ctenopharyngodon idella (Grass carp).